The primary structure comprises 154 residues: UPF0756 membrane protein CKR_1028 (154 aa).

The next 4 membrane-spanning stretches (helical) occupy residues 5–25 (IILI…VALA), 48–68 (NGLF…IADG), 82–102 (WLGI…GLGM), and 113–133 (IMPA…GVPV).

The protein belongs to the UPF0756 family.

The protein resides in the cell membrane. This chain is UPF0756 membrane protein CKR_1028, found in Clostridium kluyveri (strain NBRC 12016).